The chain runs to 316 residues: Olfactory receptor 6B9 (316 aa).

Topologically, residues 1 to 22 (MENITNISEFILMGFPTAPWLQ) are extracellular. Residues Asn3 and Asn6 are each glycosylated (N-linked (GlcNAc...) asparagine). A helical membrane pass occupies residues 23–43 (ILLFSIFFITYVFVLLENLVI). Over 44-64 (ILTVWVTGSLHKPMYYFLSTM) the chain is Cytoplasmic. Residues 65 to 85 (SFLEAWYISVTVPKMLAGFLF) form a helical membrane-spanning segment. Topologically, residues 86 to 97 (RPNTISFLGCMT) are extracellular. A disulfide bridge links Cys95 with Cys187. A helical membrane pass occupies residues 98 to 118 (QLYFFMSLACTECVLLAAMAY). Residues 119–132 (DRYVAICWPLRYPV) lie on the Cytoplasmic side of the membrane. A helical membrane pass occupies residues 133 to 153 (MMTTGFCVQLTISSWVSGFTI). At 154–199 (SMAKVYFISRVAFCGNNVLNHFFCDVSPILKLACMNLSMAETVDFA) the chain is on the extracellular side. Residues 200-220 (LAIVILIFPLSATVLSYGFIV) traverse the membrane as a helical segment. Topologically, residues 221-237 (STVLQIPSATGQRKAFS) are cytoplasmic. The helical transmembrane segment at 238–258 (TCASHLTVVVIFYTAVIFMYV) threads the bilayer. Topologically, residues 259-269 (RPRAIASFNSN) are extracellular. Residues 270 to 290 (KLISAIYAVFTPMLNPIIYCL) form a helical membrane-spanning segment. Residues 291–316 (RNKEVKDAIRKTIAGGRAPALGESIS) are Cytoplasmic-facing.

Belongs to the G-protein coupled receptor 1 family. As to expression, olfactory epithelium.

The protein localises to the cell membrane. Odorant receptor. The polypeptide is Olfactory receptor 6B9 (Mus musculus (Mouse)).